Consider the following 230-residue polypeptide: Lipoprotein-releasing system ATP-binding protein LolD (230 aa).

Positions 6-230 (LQASNLEKEY…GHFILPSETL (225 aa)) constitute an ABC transporter domain. Position 42 to 49 (42 to 49 (GSSGSGKS)) interacts with ATP.

Belongs to the ABC transporter superfamily. Lipoprotein translocase (TC 3.A.1.125) family. In terms of assembly, the complex is composed of two ATP-binding proteins (LolD) and two transmembrane proteins (LolC and LolE).

The protein resides in the cell inner membrane. Part of the ABC transporter complex LolCDE involved in the translocation of mature outer membrane-directed lipoproteins, from the inner membrane to the periplasmic chaperone, LolA. Responsible for the formation of the LolA-lipoprotein complex in an ATP-dependent manner. This Hydrogenovibrio crunogenus (strain DSM 25203 / XCL-2) (Thiomicrospira crunogena) protein is Lipoprotein-releasing system ATP-binding protein LolD.